Consider the following 224-residue polypeptide: UPF0758 protein BPUM_2444 (224 aa).

The MPN domain maps to 102–224 (VIRTPEDGAN…FVSLKEKGYL (123 aa)). Zn(2+) is bound by residues H173, H175, and D186. The JAMM motif signature appears at 173-186 (HNHPSGDPTPSRED).

This sequence belongs to the UPF0758 family.

This chain is UPF0758 protein BPUM_2444, found in Bacillus pumilus (strain SAFR-032).